We begin with the raw amino-acid sequence, 525 residues long: NAD(P)H-quinone oxidoreductase subunit 2 (525 aa).

The next 14 membrane-spanning stretches (helical) occupy residues 14–34 (AIWPEVVVTLTLLIVLVVDLV), 42–62 (SLPALSLFGLLGALVTLVLQW), 78–98 (PVSILFRGLVVATAALTVMMA), 117–137 (LTATLGGMFLAGATDLIMVFV), 167–187 (LLTGASSTAIFLYGMSLLYGL), 201–221 (LANAGLVGILALVFCLGGIGF), 240–260 (PTPVVAFLSVGSKAAGFALAI), 276–296 (AVLSVLAILTMVLGNVVAIAQ), 302–322 (LLAYSSIGQAGFVLIGLVAGT), 330–350 (IFYLMVYLAMNLGAFLCVTLF), 374–394 (LCLSICLLSLGGLPPLAGFFG), 396–416 (LYLFWAGWQAGEYTLVLVGLV), 462–482 (VGMVVTLVATIFAGILSNPLF), and 494–514 (FLGFPTAQAFAPGSASPSLAV).

The protein belongs to the complex I subunit 2 family. In terms of assembly, NDH-1 can be composed of about 15 different subunits; different subcomplexes with different compositions have been identified which probably have different functions.

It localises to the cellular thylakoid membrane. It carries out the reaction a plastoquinone + NADH + (n+1) H(+)(in) = a plastoquinol + NAD(+) + n H(+)(out). The enzyme catalyses a plastoquinone + NADPH + (n+1) H(+)(in) = a plastoquinol + NADP(+) + n H(+)(out). Its function is as follows. NDH-1 shuttles electrons from an unknown electron donor, via FMN and iron-sulfur (Fe-S) centers, to quinones in the respiratory and/or the photosynthetic chain. The immediate electron acceptor for the enzyme in this species is believed to be plastoquinone. Couples the redox reaction to proton translocation, and thus conserves the redox energy in a proton gradient. Cyanobacterial NDH-1 also plays a role in inorganic carbon-concentration. The protein is NAD(P)H-quinone oxidoreductase subunit 2 of Synechococcus sp. (strain JA-3-3Ab) (Cyanobacteria bacterium Yellowstone A-Prime).